The primary structure comprises 600 residues: Aspartate--tRNA(Asp/Asn) ligase (600 aa).

Residue E174 coordinates L-aspartate. The segment at Q198–K201 is aspartate. Residue R220 coordinates L-aspartate. ATP-binding positions include R220–E222 and Q229. H457 provides a ligand contact to L-aspartate. E491 is an ATP binding site. Residue R498 coordinates L-aspartate. G543 to R546 is an ATP binding site.

The protein belongs to the class-II aminoacyl-tRNA synthetase family. Type 1 subfamily. As to quaternary structure, homodimer.

The protein localises to the cytoplasm. It catalyses the reaction tRNA(Asx) + L-aspartate + ATP = L-aspartyl-tRNA(Asx) + AMP + diphosphate. Its function is as follows. Aspartyl-tRNA synthetase with relaxed tRNA specificity since it is able to aspartylate not only its cognate tRNA(Asp) but also tRNA(Asn). Reaction proceeds in two steps: L-aspartate is first activated by ATP to form Asp-AMP and then transferred to the acceptor end of tRNA(Asp/Asn). The protein is Aspartate--tRNA(Asp/Asn) ligase of Burkholderia multivorans (strain ATCC 17616 / 249).